The primary structure comprises 650 residues: Gamma-tubulin complex component 4 homolog (650 aa).

Residue Ser-214 is modified to Phosphoserine. Thr-216 carries the post-translational modification Phosphothreonine. Ser-218 carries the phosphoserine modification.

Belongs to the TUBGCP family.

Its subcellular location is the cytoplasm. It is found in the cytoskeleton. The protein resides in the microtubule organizing center. It localises to the centrosome. In terms of biological role, gamma-tubulin complex is necessary for microtubule nucleation at the centrosome. This is Gamma-tubulin complex component 4 homolog (Grip75) from Drosophila melanogaster (Fruit fly).